A 180-amino-acid polypeptide reads, in one-letter code: ATP-dependent protease subunit HslV (180 aa).

Thr-6 is an active-site residue. 3 residues coordinate Na(+): Ala-164, Cys-167, and Thr-170.

Belongs to the peptidase T1B family. HslV subfamily. In terms of assembly, a double ring-shaped homohexamer of HslV is capped on each side by a ring-shaped HslU homohexamer. The assembly of the HslU/HslV complex is dependent on binding of ATP.

Its subcellular location is the cytoplasm. It carries out the reaction ATP-dependent cleavage of peptide bonds with broad specificity.. Allosterically activated by HslU binding. In terms of biological role, protease subunit of a proteasome-like degradation complex believed to be a general protein degrading machinery. The protein is ATP-dependent protease subunit HslV of Borrelia turicatae (strain 91E135).